The chain runs to 677 residues: Polyunsaturated fatty acid lipoxygenase ALOX15B (677 aa).

The PLAT domain occupies 2 to 125; it reads AKFRVRVSTG…ELVLREGAAK (124 aa). Ca(2+) is bound by residues Gly-15, Gly-17, Asp-39, His-40, Gly-42, Glu-44, Asp-86, and Ala-87. Residues 126-677 form the Lipoxygenase domain; that stretch reads VSWQDHHRTL…PPLIENSVSI (552 aa). Fe cation-binding residues include His-374, His-379, His-554, and Ile-677.

Belongs to the lipoxygenase family. Fe cation serves as cofactor.

The protein resides in the cytoplasm. It is found in the cytosol. The protein localises to the cell membrane. Its subcellular location is the cytoskeleton. It localises to the membrane. The protein resides in the cell junction. It is found in the adherens junction. The protein localises to the focal adhesion. Its subcellular location is the nucleus. The catalysed reaction is (5Z,8Z,11Z,14Z)-eicosatetraenoate + O2 = (15S)-hydroperoxy-(5Z,8Z,11Z,13E)-eicosatetraenoate. The enzyme catalyses (9Z,12Z)-octadecadienoate + O2 = 13-hydroperoxy-(9Z,11E)-octadecadienoate. It carries out the reaction (5S)-hydroxy-(6E,8Z,11Z,14Z)-eicosatetraenoate + O2 = (5S)-hydroxy-(15S)-hydroperoxy-(6E,8Z,11Z,13E)-eicosatetraenoate. It catalyses the reaction (5Z,8Z,11Z,14Z)-eicosatetraenoate + O2 = 5-hydroperoxy-(6E,8Z,11Z,14Z)-eicosatetraenoate. The catalysed reaction is (5S,6R)-dihydroxy-(7E,9E,11Z,14Z)-eicosatetraenoate + O2 = (5S,6R)-dihydroxy-(15S)-hydroperoxy-(7E,9E,11Z,13E)-eicosatetraenoate. The enzyme catalyses (5S)-hydroperoxy-(6E,8Z,11Z,14Z)-eicosatetraenoate + O2 = (5S,15S)-dihydroperoxy-(6E,8Z,11Z,13E)-eicosatetraenoate. It carries out the reaction 2-(5Z,8Z,11Z,14Z-eicosatetraenoyl)-glycerol + O2 = 2-[15(S)-hydroperoxy-(5Z,8Z,11Z,13E)-eicosatetraenoyl]-glycerol. It catalyses the reaction (8S)-hydroperoxy-(5Z,9E,11Z,14Z)-eicosatetraenoate + O2 = (8S,15S)-dihydroperoxy-(5Z,9E,11Z,13E)-eicosatetraenoate. The catalysed reaction is N-(5Z,8Z,11Z,14Z)-eicosatetraenoyl-L-alanine + O2 = N-(15S)-hydroperoxy-(5Z,8Z,11Z,13E)-eicosatetraenoyl-alanine. The enzyme catalyses N-(5Z,8Z,11Z,14Z)-eicosatetraenoyl-gamma-aminobutanoate + O2 = N-(15S)-hydroperoxy-(5Z,8Z,11Z,13E)-eicosatetraenoyl-gamma-aminobutanoate. It carries out the reaction N-(5Z,8Z,11Z,14Z)-eicosatetraenoyl-glycine + O2 = N-(15S)-hydroperoxy-(5Z,8Z,11Z,13E)-eicosatetraenoyl-glycine. It catalyses the reaction N-(5Z,8Z,11Z,14Z)-eicosatetraenoyl-taurine + O2 = N-(15S)-hydroperoxy-(5Z,8Z,11Z,13E)-eicosatetraenoyl-taurine. The catalysed reaction is 2-(5Z,8Z,11Z,14Z-eicosatetraenoyl)-glycerol + O2 = 2-[12-hydroperoxy-(5Z,8Z,10E,14Z)-eicosatetraenoyl]-glycerol. The enzyme catalyses 1-octadecanoyl-2-(5Z,8Z,11Z,14Z-eicosatetraenoyl)-sn-glycero-3-phosphocholine + O2 = 1-octadecanoyl-2-(15-hydroperoxy-5Z,8Z,11Z,13E-eicosatetraenoyl)-sn-glycero-3-phosphocholine. It carries out the reaction a 1-acyl-2-(5Z,8Z,11Z,14Z-eicosatetraenoyl)-sn-glycero-3-phospho-(1D-myo-inositol) + O2 = a 1-acyl-2-(15-hydroperoxy-5Z,8Z,11Z,13E-eicosatetraenoyl)-sn-glycero-3-phospho-(1D-myo-inositol). It catalyses the reaction a 1-acyl-2-(8Z,11Z,14Z-eicosatrienoyl)-sn-glycero-3-phospho-(1D-myo-inositol) + O2 = a 1-acyl-2-(15-hydroperoxy-8Z,11Z,13E-eicosatrienoyl)-sn-glycero-3-phospho-(1D-myo-inositol). The catalysed reaction is 1-octadecanoyl-2-(5Z,8Z,11Z,14Z)-eicosatetraenoyl-sn-glycero-3-phosphoethanolamine + O2 = 1-octadecanoyl-2-(15-hydroperoxy-5Z,8Z,11Z,13E-eicosatetraenoyl)-sn-glycero-3-phosphoethanolamine. The enzyme catalyses 1-octadecanoyl-2-(5Z,8Z,11Z,14Z-eicosatetraenoyl)-sn-glycero-3-phospho-(1D-myo-inositol) + O2 = 1-octadecanoyl-2-(15-hydroperoxy-5Z,8Z,11Z,13E-eicosatetraenoyl)-sn-glycero-3-phospho-(1D-myo-inositol). It carries out the reaction (8Z,11Z,14Z)-eicosatrienoate + O2 = 15-hydroperoxy-(8Z,11Z,13E)-eicosatrienoate. It catalyses the reaction (7S)-hydroperoxy-(4Z,8E,10Z,13Z,16Z,19Z)-docosahexaenoate + O2 = (7S,17S)-dihydroperoxy-(4Z,8E,10Z,13Z,15E,19Z)-docosahexaenoate. Its pathway is lipid metabolism; hydroperoxy eicosatetraenoic acid biosynthesis. Functionally, non-heme iron-containing dioxygenase that catalyzes the stereo-specific peroxidation of free and esterified polyunsaturated fatty acids (PUFAs) generating a spectrum of bioactive lipid mediators. Inserts a peroxyl group at C15 of arachidonate ((5Z,8Z,11Z,14Z)-eicosatetraenoate) producing (15S)-hydroperoxyeicosatetraenoate/(15S)-HPETE. Also peroxidizes linoleate ((9Z,12Z)-octadecadienoate) to 13-hydroperoxyoctadecadienoate/13-HPODE. Oxygenates arachidonyl derivatives such as 2-arachidonoylglycerol (2-AG) leading to the production and extracellular release of 15-hydroxyeicosatetraenoyl glycerol (15-HETE-G) that acts as a peroxisome proliferator-activated receptor alpha agonist. Has the ability to efficiently class-switch ALOX5 pro-inflammatory mediators into anti-inflammatory intermediates. Participates in the sequential oxidations of DHA ((4Z,7Z,10Z,13Z,16Z,19Z)-docosahexaenoate) to generate specialized pro-resolving mediators (SPMs) resolvin D5 ((7S,17S)-diHPDHA), which can actively down-regulate the immune response and have anti-aggregation properties with platelets. In addition to free PUFAs hydrolyzed from phospholipids, it directly oxidizes PUFAs esterified to membrane-bound phospholipids. Has no detectable 8S-lipoxygenase activity on arachidonate but reacts with (8S)-HPETE to produce (8S,15S)-diHPETE. May regulate progression through the cell cycle and cell proliferation. May also regulate cytokine secretion by macrophages and therefore play a role in the immune response. May also regulate macrophage differentiation into proatherogenic foam cells. This chain is Polyunsaturated fatty acid lipoxygenase ALOX15B, found in Rattus norvegicus (Rat).